We begin with the raw amino-acid sequence, 1226 residues long: Methionine synthase (1226 aa).

Residues R6–V326 form the Hcy-binding domain. Zn(2+) contacts are provided by C248, C311, and C312. In terms of domain architecture, Pterin-binding spans F357–E618. A B12-binding N-terminal domain is found at S651 to S745. Residues E695, G757–D761, H760, S805, T809, and A861 contribute to the methylcob(III)alamin site. Residues N747–E882 enclose the B12-binding domain. One can recognise an AdoMet activation domain in the interval K898–G1226. S-adenosyl-L-methionine contacts are provided by residues D948, R1136, and Y1191–F1192.

It belongs to the vitamin-B12 dependent methionine synthase family. Methylcob(III)alamin serves as cofactor. Zn(2+) is required as a cofactor.

The catalysed reaction is (6S)-5-methyl-5,6,7,8-tetrahydrofolate + L-homocysteine = (6S)-5,6,7,8-tetrahydrofolate + L-methionine. It participates in amino-acid biosynthesis; L-methionine biosynthesis via de novo pathway; L-methionine from L-homocysteine (MetH route): step 1/1. Catalyzes the transfer of a methyl group from methyl-cobalamin to homocysteine, yielding enzyme-bound cob(I)alamin and methionine. Subsequently, remethylates the cofactor using methyltetrahydrofolate. The chain is Methionine synthase (metH) from Vibrio parahaemolyticus serotype O3:K6 (strain RIMD 2210633).